The following is a 711-amino-acid chain: 1,4-alpha-glucan-branching enzyme (711 aa).

(1,4-alpha-D-glucosyl)n contacts are provided by Trp-98 and Lys-135. Asp-353 functions as the Nucleophile in the catalytic mechanism. Residue Glu-414 is the Proton donor of the active site.

This sequence belongs to the glycosyl hydrolase 13 family. GlgB subfamily.

The protein resides in the cytoplasm. The catalysed reaction is Transfers a segment of a (1-&gt;4)-alpha-D-glucan chain to a primary hydroxy group in a similar glucan chain.. It participates in glycan biosynthesis; glycogen biosynthesis. In terms of biological role, glycogen-branching enzyme participates in the glycogen biosynthetic process along with glycogenin and glycogen synthase. Generates alpha-1,6-glucosidic branches from alpha-1,4-linked glucose chains, to increase solubility of the glycogen polymer. The chain is 1,4-alpha-glucan-branching enzyme (GLC3) from Debaryomyces hansenii (strain ATCC 36239 / CBS 767 / BCRC 21394 / JCM 1990 / NBRC 0083 / IGC 2968) (Yeast).